The chain runs to 506 residues: Transcription factor CP2 (506 aa).

Positions 61-300 (ENKILPFQYV…SPGFNSSHNS (240 aa)) constitute a Grh/CP2 DB domain. The segment at 133 to 395 (EHQQLEGWRW…LFNALKGRIV (263 aa)) is DNA-binding. 2 disordered regions span residues 238 to 268 (FKPK…YQPS) and 291 to 316 (SPGF…QPEP). Residues 241 to 265 (KGADRKQKTDREKMEKRTPQEKEKY) are compositionally biased toward basic and acidic residues. Residues 291-300 (SPGFNSSHNS) show a composition bias toward polar residues.

The protein belongs to the grh/CP2 family. CP2 subfamily. In terms of assembly, component of the SSP (stage selector protein) complex, which appears to be a heteromer of TFCP2 and 2 copies of NFE4.

The protein resides in the nucleus. In terms of biological role, may function as a transcription factor. This chain is Transcription factor CP2 (tfcp2), found in Xenopus laevis (African clawed frog).